A 182-amino-acid chain; its full sequence is Small ribosomal subunit protein uS4c (182 aa).

The S4 RNA-binding domain maps to 82 to 143; sequence MRLDNILFRL…KQRSKALIQN (62 aa).

The protein belongs to the universal ribosomal protein uS4 family. In terms of assembly, part of the 30S ribosomal subunit. Contacts protein S5. The interaction surface between S4 and S5 is involved in control of translational fidelity.

Its subcellular location is the plastid. The protein resides in the chloroplast. Its function is as follows. One of the primary rRNA binding proteins, it binds directly to 16S rRNA where it nucleates assembly of the body of the 30S subunit. Functionally, with S5 and S12 plays an important role in translational accuracy. This chain is Small ribosomal subunit protein uS4c (rps4), found in Libertia formosa (Snowy mermaid).